The sequence spans 240 residues: Keratinocyte-associated protein 3 (240 aa).

4 helical membrane passes run 21-41, 63-83, 95-115, and 163-183; these read VGLALILVGHVNLLVGAVLHG, VISVGSGLLSVSVGLVALLAS, LLTLALVNLLLSAACSMGLLL, and ALALWIPSLFMSAAEAALSGY.

The protein belongs to the TMEM54 family.

The protein localises to the membrane. In Mus musculus (Mouse), this protein is Keratinocyte-associated protein 3 (Krtcap3).